The chain runs to 189 residues: uncharacterized protein (189 aa).

Positions 9–69 constitute an HTH tetR-type domain; the sequence is ADTGGRILRA…SMLTSHIAAV (61 aa). A DNA-binding region (H-T-H motif) is located at residues 32 to 51; sequence TLAEIARRAGVSRPTVYRRW.

This is an uncharacterized protein from Mycobacterium bovis (strain ATCC BAA-935 / AF2122/97).